Consider the following 433-residue polypeptide: Serine hydroxymethyltransferase (433 aa).

121–123 is a (6S)-5,6,7,8-tetrahydrofolate binding site; it reads AHV. Lys-227 carries the post-translational modification N6-(pyridoxal phosphate)lysine. Residue Glu-243 participates in (6S)-5,6,7,8-tetrahydrofolate binding.

Belongs to the SHMT family. Homodimer. The cofactor is pyridoxal 5'-phosphate.

Its subcellular location is the cytoplasm. It carries out the reaction 5,10-methylenetetrahydrosulfopterin + glycine + H2O = tetrahydrosulfopterin + L-serine. It participates in amino-acid biosynthesis; glycine biosynthesis; glycine from L-serine: step 1/1. With respect to regulation, is completely inhibited by addition of NaCNBH(3) in vitro; this reagent is a known inhibitor of PLP enzymes, that reduces the internal aldimine of PLP to the catalytically inactive and stable secondary amine. Is also inhibited by L-cysteine, which forms a thiazolidine complex with the active site PLP. Its function is as follows. Catalyzes the reversible interconversion of serine and glycine with the modified folate sulfopterin serving as the one-carbon carrier. Cannot use tetrahydrofolate (THF or H4PteGlu) as the pteridine substrate. Also exhibits a pteridine-independent aldolase activity toward beta-hydroxyamino acids, producing glycine and aldehydes, via a retro-aldol mechanism. Thus, is able to catalyze the cleavage of both allo-threonine and beta-phenylserine. This Saccharolobus solfataricus (strain ATCC 35092 / DSM 1617 / JCM 11322 / P2) (Sulfolobus solfataricus) protein is Serine hydroxymethyltransferase.